The chain runs to 149 residues: Large ribosomal subunit protein uL13 (149 aa).

Belongs to the universal ribosomal protein uL13 family. In terms of assembly, part of the 50S ribosomal subunit.

Its function is as follows. This protein is one of the early assembly proteins of the 50S ribosomal subunit, although it is not seen to bind rRNA by itself. It is important during the early stages of 50S assembly. The sequence is that of Large ribosomal subunit protein uL13 from Chlorobium phaeovibrioides (strain DSM 265 / 1930) (Prosthecochloris vibrioformis (strain DSM 265)).